We begin with the raw amino-acid sequence, 1405 residues long: DNA-directed RNA polymerase subunit beta' (1405 aa).

4 residues coordinate Zn(2+): Cys70, Cys72, Cys85, and Cys88. Mg(2+)-binding residues include Asp460, Asp462, and Asp464. 4 residues coordinate Zn(2+): Cys814, Cys888, Cys895, and Cys898.

This sequence belongs to the RNA polymerase beta' chain family. In terms of assembly, the RNAP catalytic core consists of 2 alpha, 1 beta, 1 beta' and 1 omega subunit. When a sigma factor is associated with the core the holoenzyme is formed, which can initiate transcription. Requires Mg(2+) as cofactor. Zn(2+) is required as a cofactor.

The catalysed reaction is RNA(n) + a ribonucleoside 5'-triphosphate = RNA(n+1) + diphosphate. DNA-dependent RNA polymerase catalyzes the transcription of DNA into RNA using the four ribonucleoside triphosphates as substrates. The sequence is that of DNA-directed RNA polymerase subunit beta' from Shewanella sp. (strain ANA-3).